Consider the following 269-residue polypeptide: Formamidopyrimidine-DNA glycosylase (269 aa).

P2 (schiff-base intermediate with DNA) is an active-site residue. The active-site Proton donor is the E3. The active-site Proton donor; for beta-elimination activity is the K57. H90, R109, and R150 together coordinate DNA. An FPG-type zinc finger spans residues 235–269; it reads NVYGRAGQPCVQCDAILKADRHGQRSTAYCPQCQR. The Proton donor; for delta-elimination activity role is filled by R259.

The protein belongs to the FPG family. As to quaternary structure, monomer. The cofactor is Zn(2+).

It carries out the reaction Hydrolysis of DNA containing ring-opened 7-methylguanine residues, releasing 2,6-diamino-4-hydroxy-5-(N-methyl)formamidopyrimidine.. The enzyme catalyses 2'-deoxyribonucleotide-(2'-deoxyribose 5'-phosphate)-2'-deoxyribonucleotide-DNA = a 3'-end 2'-deoxyribonucleotide-(2,3-dehydro-2,3-deoxyribose 5'-phosphate)-DNA + a 5'-end 5'-phospho-2'-deoxyribonucleoside-DNA + H(+). In terms of biological role, involved in base excision repair of DNA damaged by oxidation or by mutagenic agents. Acts as a DNA glycosylase that recognizes and removes damaged bases. Has a preference for oxidized purines, such as 7,8-dihydro-8-oxoguanine (8-oxoG). Has AP (apurinic/apyrimidinic) lyase activity and introduces nicks in the DNA strand. Cleaves the DNA backbone by beta-delta elimination to generate a single-strand break at the site of the removed base with both 3'- and 5'-phosphates. This chain is Formamidopyrimidine-DNA glycosylase, found in Alcanivorax borkumensis (strain ATCC 700651 / DSM 11573 / NCIMB 13689 / SK2).